We begin with the raw amino-acid sequence, 505 residues long: Glutamate--tRNA ligase (505 aa).

The short motif at 12–22 (PSPTGALHIGG) is the 'HIGH' region element. Positions 260–264 (KLSKR) match the 'KMSKS' region motif. Lysine 263 is an ATP binding site.

It belongs to the class-I aminoacyl-tRNA synthetase family. Glutamate--tRNA ligase type 1 subfamily. Monomer.

The protein localises to the cytoplasm. The enzyme catalyses tRNA(Glu) + L-glutamate + ATP = L-glutamyl-tRNA(Glu) + AMP + diphosphate. Functionally, catalyzes the attachment of glutamate to tRNA(Glu) in a two-step reaction: glutamate is first activated by ATP to form Glu-AMP and then transferred to the acceptor end of tRNA(Glu). The sequence is that of Glutamate--tRNA ligase from Parabacteroides distasonis (strain ATCC 8503 / DSM 20701 / CIP 104284 / JCM 5825 / NCTC 11152).